The primary structure comprises 249 residues: NAD(P)H-hydrate epimerase (249 aa).

Residues 11-233 (AQQIDVELMS…ELGKKHELNI (223 aa)) enclose the YjeF N-terminal domain. 62 to 66 (NQGGD) lines the (6S)-NADPHX pocket. K(+)-binding residues include Gln63 and Asp127. (6S)-NADPHX-binding positions include 131 to 137 (GFSFQPP) and Asp162. Ser165 contacts K(+).

The protein belongs to the NnrE/AIBP family. K(+) serves as cofactor.

Its subcellular location is the cytoplasm. It is found in the mitochondrion. The catalysed reaction is (6R)-NADHX = (6S)-NADHX. It catalyses the reaction (6R)-NADPHX = (6S)-NADPHX. Its function is as follows. Catalyzes the epimerization of the S- and R-forms of NAD(P)HX, a damaged form of NAD(P)H that is a result of enzymatic or heat-dependent hydration. This is a prerequisite for the S-specific NAD(P)H-hydrate dehydratase to allow the repair of both epimers of NAD(P)HX. The chain is NAD(P)H-hydrate epimerase from Cryptococcus neoformans var. neoformans serotype D (strain JEC21 / ATCC MYA-565) (Filobasidiella neoformans).